Consider the following 158-residue polypeptide: Glycine/sarcosine/betaine reductase complex component A1 (158 aa).

Residue selenocysteine 46 is part of the active site. A non-standard amino acid (selenocysteine) is located at residue selenocysteine 46.

It belongs to the GrdA family. In terms of assembly, monomer. Component of the glycine, sarcosine and betaine reductase complexes, together with components B and C.

The catalysed reaction is acetyl phosphate + [thioredoxin]-disulfide + NH4(+) + H2O = [thioredoxin]-dithiol + glycine + phosphate + H(+). It catalyses the reaction acetyl phosphate + methylamine + [thioredoxin]-disulfide + H2O = sarcosine + [thioredoxin]-dithiol + phosphate + H(+). The enzyme catalyses acetyl phosphate + trimethylamine + [thioredoxin]-disulfide + H2O = glycine betaine + [thioredoxin]-dithiol + phosphate + H(+). Functionally, in the first step of glycine, betaine and sarcosine reductases, the substrate is bound to component PB via a Schiff base intermediate. Then the PB-activated substrate is nucleophilically attacked by the selenol anion of component PA to transform it to a carboxymethylated selenoether and the respective amine. By action of component PC, acetyl phosphate is formed, leaving component PA in its oxidized state. Finally component PA becomes reduced by the thioredoxin system to start a new catalytic cycle of reductive deamination. This is Glycine/sarcosine/betaine reductase complex component A1 (grdA1) from Photobacterium profundum (strain SS9).